We begin with the raw amino-acid sequence, 1592 residues long: ABC transporter ATP-binding protein/permease VMR1 (1592 aa).

Over 1–33 (MGTDPLIIRNNGSFWEVDDFTRLGRTQLLSYYL) the chain is Vacuolar. Residue Asn11 is glycosylated (N-linked (GlcNAc...) asparagine). A helical membrane pass occupies residues 34–54 (PLAIIASIGIFALCRSGLSRY). The Cytoplasmic portion of the chain corresponds to 55 to 74 (VRSAECDLVNEYLFGAQEER). Residues 75–95 (KEDNSIERLLRNSNTQANYVN) traverse the membrane as a helical segment. Residues 96–100 (VKKQG) lie on the Vacuolar side of the membrane. Residues 101 to 121 (RILKLRHFDITTIDVKQIDAK) traverse the membrane as a helical segment. The Cytoplasmic segment spans residues 122-131 (NHGGLTFSRP). A helical membrane pass occupies residues 132–152 (STSDHLRKSSEIVLMSLQIIG). Over 153-170 (LSFLRVTKINIELTNRDV) the chain is Vacuolar. The helical transmembrane segment at 171-191 (TTLLLFWLILLSLSILRVYKR) threads the bilayer. Topologically, residues 192-329 (STNLWAICFT…NKHINNLTLA (138 aa)) are cytoplasmic. Residues 330–350 (LFESFKTYLLIGMLWVLVNSI) form a helical membrane-spanning segment. The region spanning 338–632 (LLIGMLWVLV…LSNMLSFINQ (295 aa)) is the ABC transmembrane type-1 1 domain. Over 351–379 (VNLLPTILMKRFLEIVDNPNRSSSCMNLA) the chain is Vacuolar. Residue Asn370 is glycosylated (N-linked (GlcNAc...) asparagine). A helical membrane pass occupies residues 380 to 400 (WLYIIGMFICRLTLAICNSQG). Over 401–465 (QFVSDKICLR…SFKVSELANY (65 aa)) the chain is Cytoplasmic. Residues 466–486 (LYVTVQAVIMIIVVVGLLFNF) form a helical membrane-spanning segment. Residues 487-489 (LGV) lie on the Vacuolar side of the membrane. A helical transmembrane segment spans residues 490 to 510 (SAFAGISIILVMFPLNFLLAN). Topologically, residues 511–572 (LLGKFQKQTL…SLLKKSLVWS (62 aa)) are cytoplasmic. The chain crosses the membrane as a helical span at residues 573–593 (VTSFLWFVTPTLVTGVTFAIC). Residues 594-614 (TFVQHEDLNAPLAFTTLSLFT) are Vacuolar-facing. Residues 615 to 635 (LLKTPLDQLSNMLSFINQSKV) form a helical membrane-spanning segment. Residues 636 to 989 (SLKRISDFLR…ALTALFALYI (354 aa)) lie on the Cytoplasmic side of the membrane. One can recognise an ABC transporter 1 domain in the interval 664-908 (IEFKNATLTW…GLFKEKYVQL (245 aa)). 702-709 (GSTGSGKS) lines the ATP pocket. An ABC transmembrane type-1 2 domain is found at 981–1282 (LTALFALYIT…LVRLYSTFEM (302 aa)). A helical membrane pass occupies residues 990–1010 (TAQILFISQSWWIRHWVNDTN). At 1011–1051 (VRINAPGFAMDTLPLKGMTDSSKNKHNAFYYLTVYFLIGII) the chain is on the vacuolar side. The chain crosses the membrane as a helical span at residues 1052–1072 (QAMLGGFKTMMTFLSGMRASR). At 1073–1115 (KIFNNLLDLVLHAQIRFFDVTPVGRIMNRFSKDIEGVDQELIP) the chain is on the cytoplasmic side. Residues 1116 to 1136 (YLEVTIFCLIQCASIIFLITV) traverse the membrane as a helical segment. Ile1137 is a topological domain (vacuolar). A helical membrane pass occupies residues 1138-1158 (TPRFLTVAVIVFVLYFFVGKW). Over 1159-1229 (YLTASRELKR…VTVKWFSFRV (71 aa)) the chain is Cytoplasmic. The chain crosses the membrane as a helical span at residues 1230–1250 (DMIGAFIVLASGSFILLNIAN). The Vacuolar segment spans residues 1251-1252 (ID). A helical transmembrane segment spans residues 1253 to 1273 (SGLAGISLTYAILFTDGALWL). Over 1274–1592 (VRLYSTFEMN…IAKQSSKMMK (319 aa)) the chain is Cytoplasmic. In terms of domain architecture, ABC transporter 2 spans 1323-1572 (IEIENLSLRY…ERGIFYSMCR (250 aa)). ATP is bound at residue 1357–1364 (GRTGAGKS).

The protein belongs to the ABC transporter superfamily. In terms of assembly, ABC transporter which may be involved in multidrug resistance.

The protein localises to the vacuole membrane. The polypeptide is ABC transporter ATP-binding protein/permease VMR1 (VMR1) (Saccharomyces cerevisiae (strain ATCC 204508 / S288c) (Baker's yeast)).